The chain runs to 57 residues: Large ribosomal subunit protein bL32 (57 aa).

It belongs to the bacterial ribosomal protein bL32 family.

The chain is Large ribosomal subunit protein bL32 from Corynebacterium glutamicum (strain R).